Reading from the N-terminus, the 114-residue chain is Non-specific lipid-transfer protein 1 (114 aa).

The signal sequence occupies residues 1–23; the sequence is MEMVSKIACFVLLCMVVVAPHAE. 4 cysteine pairs are disulfide-bonded: Cys-27–Cys-73, Cys-37–Cys-50, Cys-51–Cys-96, and Cys-71–Cys-110.

The protein belongs to the plant LTP family.

Its function is as follows. Plant non-specific lipid-transfer proteins transfer phospholipids as well as galactolipids across membranes. May play a role in wax or cutin deposition in the cell walls of expanding epidermal cells and certain secretory tissues. The protein is Non-specific lipid-transfer protein 1 (LTP1) of Solanum pennellii (Tomato).